The primary structure comprises 319 residues: ATP-dependent 6-phosphofructokinase (319 aa).

Gly11 provides a ligand contact to ATP. Residue 21 to 25 (RAVVR) coordinates ADP. ATP-binding positions include 72 to 73 (RC) and 102 to 105 (GDGS). Residue Asp103 coordinates Mg(2+). 125–127 (TID) lines the substrate pocket. Catalysis depends on Asp127, which acts as the Proton acceptor. ADP is bound at residue Arg154. Substrate is bound by residues Arg162 and 169-171 (MGR). ADP contacts are provided by residues 185 to 187 (GAE), Lys211, and 213 to 215 (KMH). Residues Glu222, Arg243, and 249–252 (HIQR) each bind substrate.

It belongs to the phosphofructokinase type A (PFKA) family. ATP-dependent PFK group I subfamily. Prokaryotic clade 'B1' sub-subfamily. In terms of assembly, homotetramer. Mg(2+) is required as a cofactor.

It is found in the cytoplasm. It catalyses the reaction beta-D-fructose 6-phosphate + ATP = beta-D-fructose 1,6-bisphosphate + ADP + H(+). It functions in the pathway carbohydrate degradation; glycolysis; D-glyceraldehyde 3-phosphate and glycerone phosphate from D-glucose: step 3/4. Allosterically activated by ADP and other diphosphonucleosides, and allosterically inhibited by phosphoenolpyruvate. Catalyzes the phosphorylation of D-fructose 6-phosphate to fructose 1,6-bisphosphate by ATP, the first committing step of glycolysis. This chain is ATP-dependent 6-phosphofructokinase, found in Clostridium botulinum (strain ATCC 19397 / Type A).